The chain runs to 180 residues: PLASMODESMATA CALLOSE-BINDING PROTEIN 5 (180 aa).

Positions 1–29 (MIMSLPQCSHLRLSILAATAAMLMVITTA) are cleaved as a signal peptide. A disulfide bridge links cysteine 42 with cysteine 105. Residues 126–151 (PSSKGANNGRLADDTSMGAGQADMSR) form a disordered region. Serine 157 is lipidated: GPI-anchor amidated serine. The propeptide at 158-180 (SSWMVTFIGFGSLLTMTWIIHHL) is removed in mature form.

In terms of processing, contains two additional disulfide bonds.

The protein resides in the cell membrane. Its subcellular location is the cell junction. The protein localises to the plasmodesma. This chain is PLASMODESMATA CALLOSE-BINDING PROTEIN 5 (PDCB5), found in Arabidopsis thaliana (Mouse-ear cress).